A 348-amino-acid chain; its full sequence is Nicotinate-nucleotide--dimethylbenzimidazole phosphoribosyltransferase (348 aa).

The active-site Proton acceptor is Glu317.

Belongs to the CobT family.

It catalyses the reaction 5,6-dimethylbenzimidazole + nicotinate beta-D-ribonucleotide = alpha-ribazole 5'-phosphate + nicotinate + H(+). The protein operates within nucleoside biosynthesis; alpha-ribazole biosynthesis; alpha-ribazole from 5,6-dimethylbenzimidazole: step 1/2. Its function is as follows. Catalyzes the synthesis of alpha-ribazole-5'-phosphate from nicotinate mononucleotide (NAMN) and 5,6-dimethylbenzimidazole (DMB). In Clostridioides difficile (strain 630) (Peptoclostridium difficile), this protein is Nicotinate-nucleotide--dimethylbenzimidazole phosphoribosyltransferase.